The sequence spans 126 residues: Glycine cleavage system H protein (126 aa).

Residues 22–104 enclose the Lipoyl-binding domain; it reads VAIIGITEYA…YEKAWMVKVE (83 aa). Residue K63 is modified to N6-lipoyllysine.

It belongs to the GcvH family. The glycine cleavage system is composed of four proteins: P, T, L and H. Requires (R)-lipoate as cofactor.

The glycine cleavage system catalyzes the degradation of glycine. The H protein shuttles the methylamine group of glycine from the P protein to the T protein. In terms of biological role, is also involved in protein lipoylation via its role as an octanoyl/lipoyl carrier protein intermediate. In Staphylococcus aureus (strain USA300), this protein is Glycine cleavage system H protein.